Here is a 914-residue protein sequence, read N- to C-terminus: MSETQKENPYSSTVLLPKTDFPMKADLAKREPAQIQSWKSGQIFRKMKEQRKGKKEFVLHDGPPYANGNFHLGHSLNKIVKDIIIKSKSLAGFYADMIPGWDCHGLPIEVQVLKNLGKKARETGPEELRRLCRNYAEEFVGKQGEDLSRFLCFWEEDRIYKTMSPGFEAKIVEVFGELFQKGYVYRGKKPVYWSIDLATAHAEAEIEYYPHVSPSIYVKFPIVGEQKKFCLIWTTTPWTLPANLGICFNRKIEYSFFKTESGEELILADGLAESVTSTTGVSLNKVKSISSDELSVLKFQHPFMDRISISLFGDHVTLDAGTGCVHTAPGHGQDDYKVGLAAGLEPFSPVDDYGKYTDEFPLMQGKKVFDANPEIIQLLKDKGLLLHHSEFEHSYPHSWRSKKPLIFRATPQWFFKMDFNELREKSLSAIDGVQWIPSWGITRIRSMVETRPDWCLSRQRNWGVPIPAFTCESCGQTHIDDVSIQFFTKMVREKGIEIWYSEKAADLLPPGTKCGKCGSDSFKKGNDILDVWFDSGVSSFAVLGERKDEPPADLYFEGSDQHRGWFQSSLWPSMALRGIPPYKTVLTHGYVLDEKGHPMSKSLGNGIDPTADVIQIYGADILRLWVSSLDFRDDIKVGKESLKIVSEQYRKIRNTFRYLLGNLDGHTSEQNLPFEELEELDLFYLSKLSQFAEDVIANYEAYQFHQIYQKLILFCTVTLSQDYFDMIRDRMYCDARNSKTRKSSATALQYILETLCILTAPILSFTAEEVWVSNGKKDSVFLQNFPDLKFWKNQNLEEKFESVLQVREVVQKALEIARQENKLGKSLEAGLEIVSKNGTNLTKILPKETLEILFVVSQVHEKNPGLDVLSFYENEKFSVKVLKPVQVECPRCWRHTEDISKEGDLCGRCKSVVG.

The short motif at 64–74 (PYANGNFHLGH) is the 'HIGH' region element. Glu-557 serves as a coordination point for L-isoleucyl-5'-AMP. The 'KMSKS' region motif lies at 598 to 602 (PMSKS). Lys-601 is a binding site for ATP. Residues Cys-889, Cys-892, Cys-906, and Cys-909 each contribute to the Zn(2+) site.

The protein belongs to the class-I aminoacyl-tRNA synthetase family. IleS type 1 subfamily. As to quaternary structure, monomer. The cofactor is Zn(2+).

Its subcellular location is the cytoplasm. It catalyses the reaction tRNA(Ile) + L-isoleucine + ATP = L-isoleucyl-tRNA(Ile) + AMP + diphosphate. In terms of biological role, catalyzes the attachment of isoleucine to tRNA(Ile). As IleRS can inadvertently accommodate and process structurally similar amino acids such as valine, to avoid such errors it has two additional distinct tRNA(Ile)-dependent editing activities. One activity is designated as 'pretransfer' editing and involves the hydrolysis of activated Val-AMP. The other activity is designated 'posttransfer' editing and involves deacylation of mischarged Val-tRNA(Ile). The protein is Isoleucine--tRNA ligase of Leptospira interrogans serogroup Icterohaemorrhagiae serovar copenhageni (strain Fiocruz L1-130).